Consider the following 284-residue polypeptide: tRNA dimethylallyltransferase (284 aa).

6–13 lines the ATP pocket; that stretch reads GPTASGKS. 8 to 13 contributes to the substrate binding site; sequence TASGKS. An interaction with substrate tRNA region spans residues 31–34; that stretch reads DSLS.

Belongs to the IPP transferase family. Monomer. It depends on Mg(2+) as a cofactor.

The catalysed reaction is adenosine(37) in tRNA + dimethylallyl diphosphate = N(6)-dimethylallyladenosine(37) in tRNA + diphosphate. Catalyzes the transfer of a dimethylallyl group onto the adenine at position 37 in tRNAs that read codons beginning with uridine, leading to the formation of N6-(dimethylallyl)adenosine (i(6)A). This is tRNA dimethylallyltransferase from Nautilia profundicola (strain ATCC BAA-1463 / DSM 18972 / AmH).